The primary structure comprises 160 residues: Sec-independent protein translocase protein TatB (160 aa).

Residues methionine 1–glycine 21 traverse the membrane as a helical segment. The segment at histidine 118–valine 160 is disordered. Composition is skewed to basic and acidic residues over residues alanine 128 to lysine 140 and asparagine 149 to valine 160.

The protein belongs to the TatB family. The Tat system comprises two distinct complexes: a TatABC complex, containing multiple copies of TatA, TatB and TatC subunits, and a separate TatA complex, containing only TatA subunits. Substrates initially bind to the TatABC complex, which probably triggers association of the separate TatA complex to form the active translocon.

The protein resides in the cell inner membrane. In terms of biological role, part of the twin-arginine translocation (Tat) system that transports large folded proteins containing a characteristic twin-arginine motif in their signal peptide across membranes. Together with TatC, TatB is part of a receptor directly interacting with Tat signal peptides. TatB may form an oligomeric binding site that transiently accommodates folded Tat precursor proteins before their translocation. The polypeptide is Sec-independent protein translocase protein TatB (Helicobacter pylori (strain HPAG1)).